Consider the following 878-residue polypeptide: Enoyl-CoA isomerase/hydratase claC (878 aa).

The tract at residues 541 to 561 is disordered; the sequence is VGPASTEATSPVVEPSTMESD. Substrate-binding positions include 677–681 and Gly724; that span reads AGADL.

Belongs to the enoyl-CoA hydratase/isomerase family.

The protein operates within secondary metabolite biosynthesis. Functionally, enoyl-CoA isomerase/hydratase; part of the cla gene cluster that produces clavatol and ortho-quinone methide. The clavatol biosynthesis cluster cla and the terrestric acid cluster tra are both involved in the production of peniphenones and penilactones. The non-reducing PKS claF is responsible for the formation of clavatol from successive condensations of 3 malonyl-CoA units, presumably with a simple acetyl-CoA starter unit, and 2 methylation steps. The esterase claE probably collaborates with claF by catalyzing the hydrolysis of ACP-bound acyl intermediates to free the ACP from stalled intermediates. The clavatol oxidase claD then converts clavatol to hydroxyclavatol. Spontaneous dehydration of hydroxyclavatol leads to the accumulation of the highly active ortho-quinone methide. On the other hand, the PKS-NRPS hybrid traA is involved in the formation of crustosic acid, with the help of traB and traD. The polyketide synthase module (PKS) of traA is responsible for the synthesis of the polyketide backbone via the condensation of an acetyl-CoA starter unit with 3 malonyl-CoA units. The downstream nonribosomal peptide synthetase (NRPS) module then amidates the carboxyl end of the polyketide with L-malic acid. Because traA lacks a designated enoylreductase (ER) domain, the required activity is provided the enoyl reductase traG. Crustosic acid undergoes decarboxylation and isomerization to the terrestric acid, catalyzed by the 2-oxoglutarate-dependent dioxygenase traH. Both acids are further converted to the 2 gamma-butyrolactones (R)-5-methyltetronic acid and (S)-5-carboxylmethyltetronic acid, with involvement of the cytochrome P450 monooxygenase claJ. Spontaneous addition of the methide to these gamma-butyrolactones leads to peniphenone D and penilactone D, which undergo again stereospecific attacking by methide to give penilactones A and B. The function of the enoyl-CoA isomerase/hydratase claC has not been investigated yet. The protein is Enoyl-CoA isomerase/hydratase claC of Penicillium crustosum (Blue mold fungus).